We begin with the raw amino-acid sequence, 236 residues long: Diaminopimelate epimerase (236 aa).

Substrate contacts are provided by Asn8 and Asn55. The active-site Proton donor is Cys64. Residues 65–66 (GN), Asn159, and 176–177 (ER) each bind substrate. Cys186 acts as the Proton acceptor in catalysis. 187–188 (GT) is a substrate binding site.

This sequence belongs to the diaminopimelate epimerase family. Probably forms homotrimers.

Its subcellular location is the cytoplasm. The enzyme catalyses (2S,6S)-2,6-diaminopimelate = meso-2,6-diaminopimelate. The protein operates within amino-acid biosynthesis; L-lysine biosynthesis via DAP pathway; DL-2,6-diaminopimelate from LL-2,6-diaminopimelate: step 1/1. In terms of biological role, catalyzes the stereoinversion of LL-2,6-diaminopimelate (L,L-DAP) to meso-diaminopimelate (meso-DAP), a precursor of L-lysine and an essential component of the bacterial peptidoglycan. Also catalyzes the racemization of certain amino acids, including Lys, with low efficiency. This is Diaminopimelate epimerase from Thermotoga maritima (strain ATCC 43589 / DSM 3109 / JCM 10099 / NBRC 100826 / MSB8).